A 166-amino-acid chain; its full sequence is Large ribosomal subunit protein uL10 (166 aa).

This sequence belongs to the universal ribosomal protein uL10 family. In terms of assembly, part of the ribosomal stalk of the 50S ribosomal subunit. The N-terminus interacts with L11 and the large rRNA to form the base of the stalk. The C-terminus forms an elongated spine to which L12 dimers bind in a sequential fashion forming a multimeric L10(L12)X complex.

Forms part of the ribosomal stalk, playing a central role in the interaction of the ribosome with GTP-bound translation factors. This chain is Large ribosomal subunit protein uL10, found in Geobacillus sp. (strain WCH70).